Reading from the N-terminus, the 254-residue chain is Ciliary microtubule associated protein 1A (254 aa).

2 STPGR repeats span residues P180–R205 and P216–K241. The segment at E207–V226 is disordered.

It belongs to the CIMAP family. In terms of assembly, microtubule inner protein component of sperm flagellar doublet microtubules.

Its subcellular location is the cytoplasm. It is found in the cytoskeleton. The protein resides in the flagellum axoneme. In terms of biological role, outer dense fibers are filamentous structures located on the outside of the axoneme in the midpiece and principal piece of the mammalian sperm tail. May help to maintain the passive elastic structures and elastic recoil of the sperm tail. This Bos taurus (Bovine) protein is Ciliary microtubule associated protein 1A (CIMAP1A).